A 345-amino-acid polypeptide reads, in one-letter code: MGGNSQPHQEPRRVNNDPRAKQQKGNQVRRDRRDVHGWVVLDKPIGMTSTQAVAVLKRLFNAKRAGHAGTLDPLASGGLPIALGEATKTVPFVMDGRKRYQFTVCWGEERDTDDIEGRVTATSELRPTREAILALLPRFTGVIEQIPPRYSAIKIQGERAYDLARDGEVVELAPRPVEIHRLTLVDQPDNDRAVFEAECGKGTYVRALARDMGRILGTYGHICALRRTLVGPFGENDMIPLDQLEALCDRAASGEGSLADALLPVETALDDIPALAVTRADAARLHRGQAVLLRGRDAPTCSGTVYVTVAGRLLALAEVGNGEIIPKRVFNLTGLTASPGRNERN.

Residues 1–33 form a disordered region; it reads MGGNSQPHQEPRRVNNDPRAKQQKGNQVRRDRR. Positions 9 to 20 are enriched in basic and acidic residues; the sequence is QEPRRVNNDPRA. Catalysis depends on Asp72, which acts as the Nucleophile.

It belongs to the pseudouridine synthase TruB family. Type 1 subfamily.

The catalysed reaction is uridine(55) in tRNA = pseudouridine(55) in tRNA. In terms of biological role, responsible for synthesis of pseudouridine from uracil-55 in the psi GC loop of transfer RNAs. The sequence is that of tRNA pseudouridine synthase B from Bradyrhizobium diazoefficiens (strain JCM 10833 / BCRC 13528 / IAM 13628 / NBRC 14792 / USDA 110).